The primary structure comprises 239 residues: tRNA (guanine-N(7)-)-methyltransferase (239 aa).

S-adenosyl-L-methionine is bound by residues Glu-69, Glu-94, Asp-121, and Asp-144. Asp-144 is an active-site residue. Residues Lys-148, Asp-180, and 217–220 (TKFE) each bind substrate.

It belongs to the class I-like SAM-binding methyltransferase superfamily. TrmB family.

It carries out the reaction guanosine(46) in tRNA + S-adenosyl-L-methionine = N(7)-methylguanosine(46) in tRNA + S-adenosyl-L-homocysteine. It participates in tRNA modification; N(7)-methylguanine-tRNA biosynthesis. In terms of biological role, catalyzes the formation of N(7)-methylguanine at position 46 (m7G46) in tRNA. This Pseudoalteromonas atlantica (strain T6c / ATCC BAA-1087) protein is tRNA (guanine-N(7)-)-methyltransferase.